A 233-amino-acid chain; its full sequence is uncharacterized protein (233 aa).

Residues 196–212 (FFYEDYLIFDCRAKRRK) are the nascent chain stimulates ribosomal stalling during translation by interfering with the conformation of the peptidyl transferase center (PTC), and the translating mRNA by adopting a difficult-to-decode structure at the ribosome decoding center.

In terms of biological role, acts as an endogenous target of the ribosome quality control (RQC) pathway. During translation, the nascent chain has a propensity to stall ribosomes, thereby stimulating activation of the RQC pathway. This is an uncharacterized protein from Saccharomyces cerevisiae (strain ATCC 204508 / S288c) (Baker's yeast).